Here is a 323-residue protein sequence, read N- to C-terminus: ADP-ribose glycohydrolase MACROD1 (323 aa).

Residues Lys94, Lys101, and Lys127 each carry the N6-succinyllysine modification. Residue Lys136 forms a Glycyl lysine isopeptide (Lys-Gly) (interchain with G-Cter in SUMO2) linkage. The Macro domain maps to 139 to 320; it reads DPKYKKDKQL…IYRERLPHYF (182 aa). Position 157–159 (157–159) interacts with substrate; sequence GDI. Lys161 bears the N6-acetyllysine mark. Substrate-binding positions include 170 to 172, 177 to 182, 265 to 271, and Phe304; these read AAN, GGGGVD, and ISTGVFG.

This sequence belongs to the MacroD-type family. MacroD1/2-like subfamily. In terms of assembly, interacts with ESR1; Interacts in a manner that is estrogen independent but is enhanced by estrogen. Interacts (via macro domain) with AR.

The protein resides in the nucleus. It carries out the reaction 3''-O-acetyl-ADP-D-ribose + H2O = ADP-D-ribose + acetate + H(+). It catalyses the reaction 2''-O-acetyl-ADP-D-ribose + H2O = ADP-D-ribose + acetate + H(+). The enzyme catalyses 4-O-(ADP-D-ribosyl)-L-aspartyl-[protein] + H2O = L-aspartyl-[protein] + ADP-D-ribose + H(+). The catalysed reaction is 5-O-(ADP-D-ribosyl)-L-glutamyl-[protein] + H2O = L-glutamyl-[protein] + ADP-D-ribose + H(+). It carries out the reaction alpha-NAD(+) + H2O = ADP-D-ribose + nicotinamide + H(+). With respect to regulation, subject to competitive inhibition by the product ADP-ribose. In terms of biological role, removes ADP-ribose from aspartate and glutamate residues in proteins bearing a single ADP-ribose moiety. Inactive towards proteins bearing poly-ADP-ribose. Deacetylates O-acetyl-ADP ribose, a signaling molecule generated by the deacetylation of acetylated lysine residues in histones and other proteins. Plays a role in estrogen signaling. Binds to androgen receptor (AR) and amplifies the transactivation function of AR in response to androgen. May play an important role in carcinogenesis and/or progression of hormone-dependent cancers by feed-forward mechanism that activates ESR1 transactivation. Could be an ESR1 coactivator, providing a positive feedback regulatory loop for ESR1 signal transduction. Could be involved in invasive growth by down-regulating CDH1 in endometrial cancer cells. Enhances ESR1-mediated transcription activity. This is ADP-ribose glycohydrolase MACROD1 from Mus musculus (Mouse).